A 384-amino-acid polypeptide reads, in one-letter code: Urea transporter 1 (384 aa).

E39 carries the post-translational modification Phosphoserine. 5 helical membrane passes run 61–81 (ISQV…VGLL), 85–105 (PWWA…ALLL), 111–131 (AIAA…MAVF), 138–158 (FWWL…FSSA), and 168–188 (LPVF…ATGH). N206 is a glycosylation site (N-linked (GlcNAc...) asparagine). The next 4 membrane-spanning stretches (helical) occupy residues 250-270 (LMCL…LSLA), 276-296 (IYFG…GGMF), 305-325 (LLAL…AHLM), and 327-347 (VVHL…FLLL).

It belongs to the urea transporter family. In terms of assembly, homotrimer; each subunit contains a pore through which urea permeates. Identified in a complex with STOM. In terms of processing, N-glycosylated in red blood cells, as well as in most non-erythroid tissues, except in the gastrocnemius muscle and in the gastrointestinal tract, including liver, colon and stomach. Expressed in brain, kidney, heart, liver, lung, skeletal muscle, spleen, testis, ureter and urinary bladder (at protein level). Along the gastrointestinal tract, detected in colon, jejunum and stomach (at protein level). In the kidney, expressed in some microvessels of the inner and outer medulla, but not all (at protein level). Not detected in the cortex (at protein level). Detected in the urothelium all along the urinary tract, including the papilla surface, the ureter, the bladder and the urethra (at protein level). In the brain, expressed at the border of the corpus callosum and striatum in astrocytic cellular processes surrounding blood microvessels (at protein level). Detected in erythrocytes (at protein level).

The protein localises to the cell membrane. Its subcellular location is the basolateral cell membrane. It carries out the reaction urea(in) = urea(out). Functionally, mediates the transport of urea driven by a concentration gradient across the cell membranes of erythrocytes and the renal inner medullary collecting duct which is critical to the urinary concentrating mechanism. Facilitates water transport in erythrocytes. This chain is Urea transporter 1 (Slc14a1), found in Mus musculus (Mouse).